The sequence spans 592 residues: Aspartate--tRNA(Asp/Asn) ligase (592 aa).

Residue E182 participates in L-aspartate binding. The aspartate stretch occupies residues Q206–K209. R228 is an L-aspartate binding site. ATP is bound by residues R228–E230 and Q237. Residue H455 participates in L-aspartate binding. E489 contacts ATP. R496 lines the L-aspartate pocket. G541–R544 contacts ATP.

The protein belongs to the class-II aminoacyl-tRNA synthetase family. Type 1 subfamily. As to quaternary structure, homodimer.

It is found in the cytoplasm. The catalysed reaction is tRNA(Asx) + L-aspartate + ATP = L-aspartyl-tRNA(Asx) + AMP + diphosphate. Its function is as follows. Aspartyl-tRNA synthetase with relaxed tRNA specificity since it is able to aspartylate not only its cognate tRNA(Asp) but also tRNA(Asn). Reaction proceeds in two steps: L-aspartate is first activated by ATP to form Asp-AMP and then transferred to the acceptor end of tRNA(Asp/Asn). In Thermoanaerobacter sp. (strain X514), this protein is Aspartate--tRNA(Asp/Asn) ligase.